Here is a 67-residue protein sequence, read N- to C-terminus: MRSLYLSFSLTIIFVLVIMHAEAKAISEPNAIAEADPGIFSALKTLGKILLPVILPTVAEKIKEKVG.

A signal peptide spans 1–25 (MRSLYLSFSLTIIFVLVIMHAEAKA). A propeptide spanning residues 26 to 37 (ISEPNAIAEADP) is cleaved from the precursor. At V66 the chain carries Valine amide.

This sequence belongs to the formicidae venom clade 3 family. As to expression, expressed by the venom gland.

Its subcellular location is the secreted. Functionally, toxin that causes a rapid and irreversible paralysis when intrathoracically injected into insects (blowflies). Does not cause spontaneous nocifensive behaviors by intraplantar injection in mice. Exhibits hemolytic and cytotoxic activities on HEK293 cells. In Pogonomyrmex maricopa (Maricopa harvester ant), this protein is Myrmicitoxin(1)-Pm6a.